Reading from the N-terminus, the 281-residue chain is MSWIQKILPRTQTSHKGNVPEGIWTKCGSCQAVLYKSELEKLQEVCPKCDHHMRITARRRIDAFLDDGDRVELGAEHEPQDVLKFKDSKRYKDRIVAAQKSTNEKDALVVMQGKLKGMPVVVACFEFAFMGGSMASVVGARFVAAVNACLENDMPLICFSASGGARMQEALMSLMQMAKTSAALAKMSKKGLPYISVLTDPTMGGVSASLAMLGDINVAEPKALIGFAGPRVIEQTVREKLPEGFQRSEFLVEKGAIDMIVDRRDMRDRLHSLLVKLHYKN.

Residues 23 to 281 (IWTKCGSCQA…SLLVKLHYKN (259 aa)) enclose the CoA carboxyltransferase N-terminal domain. Positions 27, 30, 46, and 49 each coordinate Zn(2+). A C4-type zinc finger spans residues 27 to 49 (CGSCQAVLYKSELEKLQEVCPKC).

Belongs to the AccD/PCCB family. Acetyl-CoA carboxylase is a heterohexamer composed of biotin carboxyl carrier protein (AccB), biotin carboxylase (AccC) and two subunits each of ACCase subunit alpha (AccA) and ACCase subunit beta (AccD). The cofactor is Zn(2+).

It localises to the cytoplasm. The catalysed reaction is N(6)-carboxybiotinyl-L-lysyl-[protein] + acetyl-CoA = N(6)-biotinyl-L-lysyl-[protein] + malonyl-CoA. The protein operates within lipid metabolism; malonyl-CoA biosynthesis; malonyl-CoA from acetyl-CoA: step 1/1. Its function is as follows. Component of the acetyl coenzyme A carboxylase (ACC) complex. Biotin carboxylase (BC) catalyzes the carboxylation of biotin on its carrier protein (BCCP) and then the CO(2) group is transferred by the transcarboxylase to acetyl-CoA to form malonyl-CoA. This Alteromonas mediterranea (strain DSM 17117 / CIP 110805 / LMG 28347 / Deep ecotype) protein is Acetyl-coenzyme A carboxylase carboxyl transferase subunit beta.